Reading from the N-terminus, the 315-residue chain is Small ribosomal subunit protein mS45 (315 aa).

The transit peptide at 1–66 (MRNSVEFSQL…SKYVACNSRS (66 aa)) directs the protein to the mitochondrion.

The protein belongs to the mitochondrion-specific ribosomal protein mS45 family. Component of the mitochondrial small ribosomal subunit (mt-SSU). Mature yeast 74S mitochondrial ribosomes consist of a small (37S) and a large (54S) subunit. The 37S small subunit contains a 15S ribosomal RNA (15S mt-rRNA) and at least 32 different proteins. The 54S large subunit contains a 21S rRNA (21S mt-rRNA) and at least 45 different proteins.

The protein resides in the mitochondrion. Its function is as follows. Component of the mitochondrial ribosome (mitoribosome), a dedicated translation machinery responsible for the synthesis of mitochondrial genome-encoded proteins, including at least some of the essential transmembrane subunits of the mitochondrial respiratory chain. The mitoribosomes are attached to the mitochondrial inner membrane and translation products are cotranslationally integrated into the membrane. Required for mitochondrial protein synthesis. Has a role in mitochondrial integrity and cell respiration. This is Small ribosomal subunit protein mS45 (bot1) from Schizosaccharomyces pombe (strain 972 / ATCC 24843) (Fission yeast).